We begin with the raw amino-acid sequence, 590 residues long: Pescadillo homolog (590 aa).

Residues 332 to 422 (VCKSLFKDLK…IILPTEKYLV (91 aa)) form the BRCT domain. The segment at 561-590 (AMKISQSRKRSGVEIIEQRKKRLNDTQPSS) is disordered.

Belongs to the pescadillo family. As to quaternary structure, interacts with BOP1 and WDR12. Interacts with NSN1. Expressed in shoot and root apical meristems, epidermal cells and vasculature of developing leaves, trichome progenitor cells, young flowers, developing pollen grains and ovules, and mature pollen grains.

It localises to the nucleus. The protein localises to the nucleolus. It is found in the nucleoplasm. Required for maturation of ribosomal RNAs and formation of the large ribosomal subunit. Plays an essential role in cell growth and survival through its regulation of ribosome biogenesis and mitotic progression. Required for normal root cell growth and differentiation. This Arabidopsis thaliana (Mouse-ear cress) protein is Pescadillo homolog.